Reading from the N-terminus, the 299-residue chain is MKPDAHHVKQFLLRLQDDICQTLSAVDGANFVEDSWRREAGGGGRSRVLRNGGIFEQAGVNFSHVHGDAMPASATAHRPELAGRSFEAMGVSLVVHPHNPYIPTSHANVRFFIAEKPGADPVWWFGGGFDLTPYYGFEEDAVHWHRTARDLCQPFGDDVYPRYKKWCDDYFFLKHRNEQRGIGGLFFDDLNTPDFDHCFAFMQAVGNGYTEAYLPIVERRKAMVWGERERNFQLYRRGRYVEFNLVWDRGTLFGLQTGGRTESILMSMPPLVRWEYDWQPEAGSPEAALSEFIQVRDWI.

Serine 92 serves as a coordination point for substrate. Residues histidine 96 and histidine 106 each coordinate a divalent metal cation. The Proton donor role is filled by histidine 106. 108 to 110 (NVR) provides a ligand contact to substrate. Positions 145 and 175 each coordinate a divalent metal cation. The tract at residues 240-275 (YVEFNLVWDRGTLFGLQTGGRTESILMSMPPLVRWE) is important for dimerization. 258 to 260 (GGR) contacts substrate.

This sequence belongs to the aerobic coproporphyrinogen-III oxidase family. As to quaternary structure, homodimer. The cofactor is a divalent metal cation.

The protein resides in the cytoplasm. The enzyme catalyses coproporphyrinogen III + O2 + 2 H(+) = protoporphyrinogen IX + 2 CO2 + 2 H2O. It participates in porphyrin-containing compound metabolism; protoporphyrin-IX biosynthesis; protoporphyrinogen-IX from coproporphyrinogen-III (O2 route): step 1/1. Its function is as follows. Involved in the heme biosynthesis. Catalyzes the aerobic oxidative decarboxylation of propionate groups of rings A and B of coproporphyrinogen-III to yield the vinyl groups in protoporphyrinogen-IX. The protein is Oxygen-dependent coproporphyrinogen-III oxidase of Salmonella newport (strain SL254).